The sequence spans 245 residues: MTFTASSSSCAITESPVVVALDYHERDKALAFVDKIDPRDCRLKVGKEMFTLFGPQLVRDLQQRGFDVFLDLKFHDIPNTTARAVAAAADLGVWMVNVHASGGARMMAAARDALAPFSKDAPLLIAVTVLTSMGTSDLHDLGVTLSPAEHAERLARLTQQCGLDGVVCSAQEAVRFKQAFGAAFKLVTPGIRPAGSEAGDQRRIMTPEQALSAGVDYMVIGRPVTQSVDPAQTLKDINASLKREA.

Substrate-binding positions include Asp-22, Lys-44, 71–80 (DLKFHDIPNT), Thr-131, Arg-192, Gln-201, Gly-221, and Arg-222. Catalysis depends on Lys-73, which acts as the Proton donor.

This sequence belongs to the OMP decarboxylase family. Type 1 subfamily. In terms of assembly, homodimer.

It carries out the reaction orotidine 5'-phosphate + H(+) = UMP + CO2. The protein operates within pyrimidine metabolism; UMP biosynthesis via de novo pathway; UMP from orotate: step 2/2. Its function is as follows. Catalyzes the decarboxylation of orotidine 5'-monophosphate (OMP) to uridine 5'-monophosphate (UMP). The protein is Orotidine 5'-phosphate decarboxylase of Salmonella typhi.